The primary structure comprises 118 residues: Non-specific lipid-transfer protein (118 aa).

The signal sequence occupies residues 1–25; that stretch reads MDCIRILWSVAVGLLLVSWRPTMFA. 4 cysteine pairs are disulfide-bonded: cysteine 30-cysteine 76, cysteine 40-cysteine 53, cysteine 54-cysteine 98, and cysteine 74-cysteine 113.

The protein belongs to the plant LTP family.

Plant non-specific lipid-transfer proteins transfer phospholipids as well as galactolipids across membranes. May play a role in wax or cutin deposition in the cell walls of expanding epidermal cells and certain secretory tissues. This is Non-specific lipid-transfer protein from Ambrosia artemisiifolia (Common ragweed).